Here is a 414-residue protein sequence, read N- to C-terminus: MIOREX complex component 10 (414 aa).

Residues 1 to 29 (MLSFRSLTSTFGFVSRFQIRRLGTSLSIQ) constitute a mitochondrion transit peptide. Residues 30–373 (NLEVQDGRWK…ISLLNERNST (344 aa)) are Mitochondrial matrix-facing. The chain crosses the membrane as a helical span at residues 374–394 (FLEWIIIYLIAFELCFEIYHF). Over 395–414 (YQKYSSYCSEPTNDDLDATK) the chain is Mitochondrial intermembrane.

It belongs to the RMD1/sif2 family. Associates with the mitochondrial ribosome.

Its subcellular location is the mitochondrion inner membrane. In terms of biological role, component of MIOREX complexes, large expressome-like assemblies of ribosomes with factors involved in all the steps of post-transcriptional gene expression. This is MIOREX complex component 10 from Saccharomyces cerevisiae (strain ATCC 204508 / S288c) (Baker's yeast).